The chain runs to 410 residues: WD repeat-containing protein jip5 (410 aa).

6 WD repeats span residues Pro-9–His-48, Arg-74–Lys-113, Ala-119–Ala-160, Val-223–Glu-264, Gly-273–Glu-316, and Asp-320–Glu-357. The interval Pro-41–His-65 is disordered. Over residues Glu-43–Gln-53 the composition is skewed to acidic residues. The interval Ile-354 to Asp-410 is disordered. Residues Asp-364 to Asp-376 are compositionally biased toward acidic residues. Basic and acidic residues predominate over residues His-377–Arg-386.

Belongs to the WD repeat WDR55 family.

The protein localises to the nucleus. Its subcellular location is the nucleolus. This Emericella nidulans (strain FGSC A4 / ATCC 38163 / CBS 112.46 / NRRL 194 / M139) (Aspergillus nidulans) protein is WD repeat-containing protein jip5 (jip5).